The primary structure comprises 231 residues: MKINQVVLIRHGQSEWNTLNKFTGWHDAELDKKGKDEAKFAAILLKKEKFFFDCAHTSLLKRAIHTLQYILDELNQTWLSVKKSWRLNERHYGALEGLNKDEVIEKYGQKQVLLWRRSFDISPPQINIKDKRFPGNDPRYSHLNIHDIPLGESLEKTAKRVIPYWNKIIYPELKNNKKILIVAHGNSLRALIQHLYKIDNKAILDLNIPTAQPIILDFDNEKNPIKWHYLT.

Residues 10 to 17 (RHGQSEWN), 23 to 24 (TG), arginine 62, 89 to 92 (ERHY), lysine 100, 116 to 117 (RR), and 185 to 186 (GN) each bind substrate. Histidine 11 acts as the Tele-phosphohistidine intermediate in catalysis. Catalysis depends on glutamate 89, which acts as the Proton donor/acceptor.

Belongs to the phosphoglycerate mutase family. BPG-dependent PGAM subfamily. As to quaternary structure, homodimer.

The catalysed reaction is (2R)-2-phosphoglycerate = (2R)-3-phosphoglycerate. Its pathway is carbohydrate degradation; glycolysis; pyruvate from D-glyceraldehyde 3-phosphate: step 3/5. In terms of biological role, catalyzes the interconversion of 2-phosphoglycerate and 3-phosphoglycerate. This is 2,3-bisphosphoglycerate-dependent phosphoglycerate mutase from Buchnera aphidicola subsp. Acyrthosiphon pisum (strain 5A).